The following is a 122-amino-acid chain: Large ribosomal subunit protein uL14 (122 aa).

This sequence belongs to the universal ribosomal protein uL14 family. Part of the 50S ribosomal subunit. Forms a cluster with proteins L3 and L19. In the 70S ribosome, L14 and L19 interact and together make contacts with the 16S rRNA in bridges B5 and B8.

In terms of biological role, binds to 23S rRNA. Forms part of two intersubunit bridges in the 70S ribosome. The chain is Large ribosomal subunit protein uL14 from Syntrophus aciditrophicus (strain SB).